Reading from the N-terminus, the 249-residue chain is Indole-3-glycerol phosphate synthase (249 aa).

This sequence belongs to the TrpC family.

The enzyme catalyses 1-(2-carboxyphenylamino)-1-deoxy-D-ribulose 5-phosphate + H(+) = (1S,2R)-1-C-(indol-3-yl)glycerol 3-phosphate + CO2 + H2O. It participates in amino-acid biosynthesis; L-tryptophan biosynthesis; L-tryptophan from chorismate: step 4/5. This Pyrobaculum aerophilum (strain ATCC 51768 / DSM 7523 / JCM 9630 / CIP 104966 / NBRC 100827 / IM2) protein is Indole-3-glycerol phosphate synthase.